We begin with the raw amino-acid sequence, 111 residues long: Cytochrome c (111 aa).

N-acetylalanine is present on Ala-1. Cys-22, Cys-25, and His-26 together coordinate heme c. Lys-80 is subject to N6,N6,N6-trimethyllysine. Met-88 contacts heme c. Lys-94 bears the N6,N6,N6-trimethyllysine mark.

The protein belongs to the cytochrome c family. In terms of processing, binds 1 heme c group covalently per subunit.

Its subcellular location is the mitochondrion intermembrane space. Electron carrier protein. The oxidized form of the cytochrome c heme group can accept an electron from the heme group of the cytochrome c1 subunit of cytochrome reductase. Cytochrome c then transfers this electron to the cytochrome oxidase complex, the final protein carrier in the mitochondrial electron-transport chain. The sequence is that of Cytochrome c from Gossypium barbadense (Sea Island cotton).